Consider the following 105-residue polypeptide: Integration host factor subunit alpha (105 aa).

This sequence belongs to the bacterial histone-like protein family. In terms of assembly, heterodimer of an alpha and a beta chain.

Functionally, this protein is one of the two subunits of integration host factor, a specific DNA-binding protein that functions in genetic recombination as well as in transcriptional and translational control. This is Integration host factor subunit alpha from Rhodospirillum rubrum (strain ATCC 11170 / ATH 1.1.1 / DSM 467 / LMG 4362 / NCIMB 8255 / S1).